The chain runs to 148 residues: 3-dehydroquinate dehydratase (148 aa).

Residue Tyr-23 is the Proton acceptor of the active site. Substrate contacts are provided by Asn-75, His-81, and Asp-88. The Proton donor role is filled by His-101. Substrate contacts are provided by residues 102-103 (LS) and Arg-112.

This sequence belongs to the type-II 3-dehydroquinase family. In terms of assembly, homododecamer.

It carries out the reaction 3-dehydroquinate = 3-dehydroshikimate + H2O. It functions in the pathway metabolic intermediate biosynthesis; chorismate biosynthesis; chorismate from D-erythrose 4-phosphate and phosphoenolpyruvate: step 3/7. Functionally, catalyzes a trans-dehydration via an enolate intermediate. The sequence is that of 3-dehydroquinate dehydratase from Xanthomonas axonopodis pv. citri (strain 306).